The following is a 290-amino-acid chain: Syntaxin (290 aa).

The disordered stretch occupies residues 1-22 (MTKDRLAALKAAQSDDDDNDDV). Residues 1 to 267 (MTKDRLAALK…KYQSKARRKK (267 aa)) are Cytoplasmic-facing. A coiled-coil region spans residues 32 to 114 (MEEFFEQVDE…EEHTNKSSAD (83 aa)). Positions 194–256 (LADIEARHND…ETAKMDTKKA (63 aa)) constitute a t-SNARE coiled-coil homology domain. The helical; Anchor for type IV membrane protein transmembrane segment at 268–288 (IMILVCLAILIIILVGVIGGT) threads the bilayer. Residues 289 to 290 (LG) lie on the Extracellular side of the membrane.

It belongs to the syntaxin family.

The protein resides in the membrane. In terms of biological role, potentially involved in docking of synaptic vesicles at presynaptic active zones. The chain is Syntaxin from Aplysia californica (California sea hare).